The chain runs to 374 residues: UDP-N-acetylglucosamine--N-acetylmuramyl-(pentapeptide) pyrophosphoryl-undecaprenol N-acetylglucosamine transferase (374 aa).

UDP-N-acetyl-alpha-D-glucosamine contacts are provided by residues 35–37 (TGG), Asn144, Arg185, Ser211, and Gln305.

Belongs to the glycosyltransferase 28 family. MurG subfamily.

The protein resides in the cell inner membrane. The catalysed reaction is di-trans,octa-cis-undecaprenyl diphospho-N-acetyl-alpha-D-muramoyl-L-alanyl-D-glutamyl-meso-2,6-diaminopimeloyl-D-alanyl-D-alanine + UDP-N-acetyl-alpha-D-glucosamine = di-trans,octa-cis-undecaprenyl diphospho-[N-acetyl-alpha-D-glucosaminyl-(1-&gt;4)]-N-acetyl-alpha-D-muramoyl-L-alanyl-D-glutamyl-meso-2,6-diaminopimeloyl-D-alanyl-D-alanine + UDP + H(+). It functions in the pathway cell wall biogenesis; peptidoglycan biosynthesis. In terms of biological role, cell wall formation. Catalyzes the transfer of a GlcNAc subunit on undecaprenyl-pyrophosphoryl-MurNAc-pentapeptide (lipid intermediate I) to form undecaprenyl-pyrophosphoryl-MurNAc-(pentapeptide)GlcNAc (lipid intermediate II). This Trichodesmium erythraeum (strain IMS101) protein is UDP-N-acetylglucosamine--N-acetylmuramyl-(pentapeptide) pyrophosphoryl-undecaprenol N-acetylglucosamine transferase.